The chain runs to 101 residues: Large ribosomal subunit protein uL24 (101 aa).

It belongs to the universal ribosomal protein uL24 family. As to quaternary structure, part of the 50S ribosomal subunit.

Functionally, one of two assembly initiator proteins, it binds directly to the 5'-end of the 23S rRNA, where it nucleates assembly of the 50S subunit. One of the proteins that surrounds the polypeptide exit tunnel on the outside of the subunit. This Streptococcus sanguinis (strain SK36) protein is Large ribosomal subunit protein uL24.